The primary structure comprises 146 residues: UPF0178 protein BC_3040 (146 aa).

It belongs to the UPF0178 family.

The polypeptide is UPF0178 protein BC_3040 (Bacillus cereus (strain ATCC 14579 / DSM 31 / CCUG 7414 / JCM 2152 / NBRC 15305 / NCIMB 9373 / NCTC 2599 / NRRL B-3711)).